The chain runs to 287 residues: Polyamine aminopropyltransferase (287 aa).

One can recognise a PABS domain in the interval 5–238 (EIWYETLHAN…GIMTFAWASN (234 aa)). Gln-33 provides a ligand contact to S-methyl-5'-thioadenosine. 2 residues coordinate spermidine: His-64 and Asp-88. Residues Glu-108 and 140–141 (DG) contribute to the S-methyl-5'-thioadenosine site. Asp-158 serves as the catalytic Proton acceptor. 158–161 (DCTD) contacts spermidine. An S-methyl-5'-thioadenosine-binding site is contributed by Pro-165.

This sequence belongs to the spermidine/spermine synthase family. In terms of assembly, homodimer or homotetramer.

It localises to the cytoplasm. It catalyses the reaction S-adenosyl 3-(methylsulfanyl)propylamine + putrescine = S-methyl-5'-thioadenosine + spermidine + H(+). It participates in amine and polyamine biosynthesis; spermidine biosynthesis; spermidine from putrescine: step 1/1. In terms of biological role, catalyzes the irreversible transfer of a propylamine group from the amino donor S-adenosylmethioninamine (decarboxy-AdoMet) to putrescine (1,4-diaminobutane) to yield spermidine. The sequence is that of Polyamine aminopropyltransferase from Pectobacterium carotovorum subsp. carotovorum (strain PC1).